Reading from the N-terminus, the 343-residue chain is 5-amino-6-(D-ribitylamino)uracil--L-tyrosine 4-hydroxyphenyl transferase (343 aa).

The Radical SAM core domain maps to Val39–Glu268. Residues Cys53, Cys57, and Cys60 each coordinate [4Fe-4S] cluster.

Belongs to the radical SAM superfamily. CofH family. Consists of two subunits, CofG and CofH. The cofactor is [4Fe-4S] cluster.

The enzyme catalyses 5-amino-6-(D-ribitylamino)uracil + L-tyrosine + S-adenosyl-L-methionine = 5-amino-5-(4-hydroxybenzyl)-6-(D-ribitylimino)-5,6-dihydrouracil + 2-iminoacetate + 5'-deoxyadenosine + L-methionine + H(+). Its pathway is cofactor biosynthesis; coenzyme F0 biosynthesis. Its function is as follows. Catalyzes the radical-mediated synthesis of 5-amino-5-(4-hydroxybenzyl)-6-(D-ribitylimino)-5,6-dihydrouracil from 5-amino-6-(D-ribitylamino)uracil and L-tyrosine. The chain is 5-amino-6-(D-ribitylamino)uracil--L-tyrosine 4-hydroxyphenyl transferase from Archaeoglobus fulgidus (strain ATCC 49558 / DSM 4304 / JCM 9628 / NBRC 100126 / VC-16).